The chain runs to 131 residues: Phosphoribosyl-AMP cyclohydrolase (131 aa).

A Mg(2+)-binding site is contributed by D78. Residue C79 participates in Zn(2+) binding. D80 and D82 together coordinate Mg(2+). 2 residues coordinate Zn(2+): C96 and C103.

This sequence belongs to the PRA-CH family. In terms of assembly, homodimer. The cofactor is Mg(2+). It depends on Zn(2+) as a cofactor.

It is found in the cytoplasm. The catalysed reaction is 1-(5-phospho-beta-D-ribosyl)-5'-AMP + H2O = 1-(5-phospho-beta-D-ribosyl)-5-[(5-phospho-beta-D-ribosylamino)methylideneamino]imidazole-4-carboxamide. It functions in the pathway amino-acid biosynthesis; L-histidine biosynthesis; L-histidine from 5-phospho-alpha-D-ribose 1-diphosphate: step 3/9. Catalyzes the hydrolysis of the adenine ring of phosphoribosyl-AMP. The sequence is that of Phosphoribosyl-AMP cyclohydrolase from Thioalkalivibrio sulfidiphilus (strain HL-EbGR7).